Here is an 88-residue protein sequence, read N- to C-terminus: UPF0297 protein BLi02868/BL02032 (88 aa).

The protein belongs to the UPF0297 family.

The sequence is that of UPF0297 protein BLi02868/BL02032 from Bacillus licheniformis (strain ATCC 14580 / DSM 13 / JCM 2505 / CCUG 7422 / NBRC 12200 / NCIMB 9375 / NCTC 10341 / NRRL NRS-1264 / Gibson 46).